We begin with the raw amino-acid sequence, 297 residues long: ER membrane protein complex subunit 2 (297 aa).

An N-acetylalanine modification is found at Ala2. TPR repeat units follow at residues 87 to 120 (HRVK…DPTN), 155 to 188 (QEAW…NPHN), and 192 to 225 (CQQY…NNRN). Position 255 is an N6-acetyllysine (Lys255).

It belongs to the EMC2 family. Component of the ER membrane protein complex (EMC). Interacts with WNK1 (via amphipathic alpha-helix region); promoting the ER membrane protein complex assembly by preventing EMC2 ubiquitination. Ubiquitinated when soluble in the cytoplasm, leading to its degradation by the proteasome. Interaction with EMC2 prevents its ubiquitination and degradation.

The protein localises to the endoplasmic reticulum membrane. Functionally, part of the endoplasmic reticulum membrane protein complex (EMC) that enables the energy-independent insertion into endoplasmic reticulum membranes of newly synthesized membrane proteins. Preferentially accommodates proteins with transmembrane domains that are weakly hydrophobic or contain destabilizing features such as charged and aromatic residues. Involved in the cotranslational insertion of multi-pass membrane proteins in which stop-transfer membrane-anchor sequences become ER membrane spanning helices. It is also required for the post-translational insertion of tail-anchored/TA proteins in endoplasmic reticulum membranes. By mediating the proper cotranslational insertion of N-terminal transmembrane domains in an N-exo topology, with translocated N-terminus in the lumen of the ER, controls the topology of multi-pass membrane proteins like the G protein-coupled receptors. By regulating the insertion of various proteins in membranes, it is indirectly involved in many cellular processes. In Homo sapiens (Human), this protein is ER membrane protein complex subunit 2.